Reading from the N-terminus, the 163-residue chain is Globin CTT-Z (163 aa).

The N-terminal stretch at 1-16 (MKFFAVLALCIVGAIA) is a signal peptide. Positions 18–162 (PLTSDEAALV…VYTAVFQIVT (145 aa)) constitute a Globin domain. Heme b contacts are provided by H76 and H111.

The protein belongs to the globin family.

The sequence is that of Globin CTT-Z (CTT-Z) from Chironomus thummi piger (Midge).